The following is a 437-amino-acid chain: Serine--tRNA ligase (437 aa).

244 to 246 (TAE) lines the L-serine pocket. 275-277 (RSE) provides a ligand contact to ATP. Glu-298 contributes to the L-serine binding site. An ATP-binding site is contributed by 362–365 (EISS). Ser-397 serves as a coordination point for L-serine.

Belongs to the class-II aminoacyl-tRNA synthetase family. Type-1 seryl-tRNA synthetase subfamily. In terms of assembly, homodimer. The tRNA molecule binds across the dimer.

It is found in the cytoplasm. It catalyses the reaction tRNA(Ser) + L-serine + ATP = L-seryl-tRNA(Ser) + AMP + diphosphate + H(+). It carries out the reaction tRNA(Sec) + L-serine + ATP = L-seryl-tRNA(Sec) + AMP + diphosphate + H(+). It functions in the pathway aminoacyl-tRNA biosynthesis; selenocysteinyl-tRNA(Sec) biosynthesis; L-seryl-tRNA(Sec) from L-serine and tRNA(Sec): step 1/1. Functionally, catalyzes the attachment of serine to tRNA(Ser). Is also able to aminoacylate tRNA(Sec) with serine, to form the misacylated tRNA L-seryl-tRNA(Sec), which will be further converted into selenocysteinyl-tRNA(Sec). This chain is Serine--tRNA ligase, found in Nitrosomonas europaea (strain ATCC 19718 / CIP 103999 / KCTC 2705 / NBRC 14298).